We begin with the raw amino-acid sequence, 35 residues long: Cupiennin-2d (35 aa).

Q35 carries the glutamine amide modification.

In terms of tissue distribution, expressed by the venom gland.

It localises to the secreted. In Cupiennius salei (American wandering spider), this protein is Cupiennin-2d.